The sequence spans 489 residues: Serotonin-gated chloride channel mod-1 (489 aa).

The first 20 residues, 1-20 (MKFIPEITLLLLLFVHSTQA), serve as a signal peptide directing secretion. At 21 to 240 (KGKRRKCPEG…VTFTFKRRYG (220 aa)) the chain is on the extracellular side. N-linked (GlcNAc...) asparagine glycosylation is found at Asn44, Asn103, and Asn144. Tyr180 and Trp226 together coordinate serotonin. 3 helical membrane passes run 241–261 (FYII…WVSF), 274–294 (VGIS…KNLP), and 304–324 (VWML…AFVC). The Cytoplasmic segment spans residues 325–458 (YISRCQNSVR…ARFHPEAVDK (134 aa)). The disordered stretch occupies residues 365 to 398 (GSVISHYHPTSNGNGNNNRHDTPQVTGRGSLHRN). A compositionally biased stretch (polar residues) spans 372-391 (HPTSNGNGNNNRHDTPQVTG). Residues 459–479 (FSIVAFPLAFTMFNLVYWWHY) traverse the membrane as a helical segment.

It belongs to the ligand-gated ion channel (TC 1.A.9) family. Expressed in a subset of muscles, and head and tail neurons, including RME and GABAergic ventral nerve cord neurons. Expressed in AIY, RME, RID, RIF, ASI, DD1-6, and PVN neurons.

It is found in the membrane. It localises to the cell membrane. Functionally, functions as a 5-hydroxytryptamine (serotonin) receptor. This receptor is a ligand-gated anion-specific ion channel, selective for chloride ions. Relays a long-range endocrine signal from the body cavity neurons to modulate distal adipose triglyceride lipase atgl-1 function, via the nuclear receptor nhr-76. Together with the G-protein coupled serotonin receptor ser-1 involved in male mating behavior. May mediate an inhibitory effect of serotonin on egg laying. Involved in regulating locomotory behavior, perhaps by modulating interneuronal signaling, acting in concert with G-protein coupled serotonin receptor ser-4. In the presence of food, plays a role in initiating and extending dwelling behavior, perhaps acting in AIY, RIF and ASI neurons, in opposition to neuropeptide PDF-mediated signaling. Plays a role in aversive learning upon exposure to pathogens such as Gram-negative bacterium P.aeruginosa strain PA14; perhaps acting in interneurons in response to serotonin released by the serotonergic ADF neurons. The polypeptide is Serotonin-gated chloride channel mod-1 (Caenorhabditis elegans).